The chain runs to 342 residues: Guanine nucleotide-binding protein alpha-9 subunit (342 aa).

A lipid anchor (N-myristoyl glycine) is attached at G2. A lipid anchor (S-palmitoyl cysteine) is attached at C3. Residues 28–342 (REIKLLLLGS…IIQSILKLHY (315 aa)) form the G-alpha domain. The tract at residues 31–44 (KLLLLGSGDSGKST) is G1 motif. GTP is bound by residues 36-43 (GSGDSGKS), 167-173 (LRCRQRT), 192-196 (DVGGQ), 261-264 (NKND), and A316. S43 and T173 together coordinate Mg(2+). Residues 165-173 (DVLRCRQRT) are G2 motif. Residues 188–197 (FRLIDVGGQK) form a G3 motif region. Residues 257 to 264 (VLFLNKND) form a G4 motif region. The interval 314-319 (TTATDT) is G5 motif.

Belongs to the G-alpha family. G proteins are composed of 3 units; alpha, beta and gamma. The alpha chain contains the guanine nucleotide binding site.

Functionally, guanine nucleotide-binding proteins (G proteins) are involved as modulators or transducers in various transmembrane signaling systems. G alpha-9 antagonizes broad chemotactic response. It functions rapidly following receptor stimulation to negatively regulate PI3K/PTEN, adenylyl cyclase, and guanylyl cyclase pathways. This Dictyostelium discoideum (Social amoeba) protein is Guanine nucleotide-binding protein alpha-9 subunit (gpaI).